The following is a 178-amino-acid chain: Large ribosomal subunit protein uL5 (178 aa).

The protein belongs to the universal ribosomal protein uL5 family. Part of the 50S ribosomal subunit; part of the 5S rRNA/L5/L18/L25 subcomplex. Contacts the 5S rRNA and the P site tRNA. Forms a bridge to the 30S subunit in the 70S ribosome.

Its function is as follows. This is one of the proteins that bind and probably mediate the attachment of the 5S RNA into the large ribosomal subunit, where it forms part of the central protuberance. In the 70S ribosome it contacts protein S13 of the 30S subunit (bridge B1b), connecting the 2 subunits; this bridge is implicated in subunit movement. Contacts the P site tRNA; the 5S rRNA and some of its associated proteins might help stabilize positioning of ribosome-bound tRNAs. The protein is Large ribosomal subunit protein uL5 of Acinetobacter baylyi (strain ATCC 33305 / BD413 / ADP1).